Here is a 122-residue protein sequence, read N- to C-terminus: Allatotropin (122 aa).

The N-terminal stretch at 1–23 is a signal peptide; sequence MRVILAITLLFVAGSFIATASKG. Positions 24-40 are excised as a propeptide; that stretch reads RNYPRFFKHRMKLREIR. Position 53 is a phenylalanine amide (F53). Residues 57–122 constitute a propeptide that is removed on maturation; sequence ESPAERIPDL…GDDSKKGTIA (66 aa).

In terms of tissue distribution, expressed in brain and ventral ganglia but not in the retrocerebral complex (at protein level).

Its subcellular location is the secreted. Its function is as follows. Neuropeptide stimulator of juvenile hormone synthesis. The polypeptide is Allatotropin (Camponotus floridanus (Florida carpenter ant)).